The chain runs to 410 residues: Peptidase T (410 aa).

H79 contacts Zn(2+). Residue D81 is part of the active site. Residue D142 coordinates Zn(2+). The active-site Proton acceptor is E176. 3 residues coordinate Zn(2+): E177, D199, and H381.

Belongs to the peptidase M20B family. It depends on Zn(2+) as a cofactor.

It localises to the cytoplasm. The catalysed reaction is Release of the N-terminal residue from a tripeptide.. In terms of biological role, cleaves the N-terminal amino acid of tripeptides. In Geobacillus sp. (strain WCH70), this protein is Peptidase T.